Reading from the N-terminus, the 104-residue chain is Large ribosomal subunit protein uL24 (104 aa).

It belongs to the universal ribosomal protein uL24 family. In terms of assembly, part of the 50S ribosomal subunit.

Functionally, one of two assembly initiator proteins, it binds directly to the 5'-end of the 23S rRNA, where it nucleates assembly of the 50S subunit. Its function is as follows. One of the proteins that surrounds the polypeptide exit tunnel on the outside of the subunit. In Brevibacillus brevis (strain 47 / JCM 6285 / NBRC 100599), this protein is Large ribosomal subunit protein uL24.